The following is a 401-amino-acid chain: Heparan-sulfate 6-O-sulfotransferase 1 (401 aa).

Topologically, residues 1 to 4 (MVER) are cytoplasmic. The chain crosses the membrane as a helical; Signal-anchor for type II membrane protein span at residues 5 to 27 (ASKFVLVVAGSACFMLILYQYAG). Topologically, residues 28-401 (PGLSLGAPGG…DYMSHIIEKW (374 aa)) are lumenal. Residue 83 to 91 (HIQKTGGTT) participates in 3'-phosphoadenylyl sulfate binding. Residues 113–114 (KK), arginine 130, tryptophan 135, and histidine 140 contribute to the substrate site. The Proton acceptor role is filled by histidine 140. Arginine 175 and serine 183 together coordinate 3'-phosphoadenylyl sulfate. 2 residues coordinate substrate: histidine 187 and tryptophan 194. Asparagine 254 is a glycosylation site (N-linked (GlcNAc...) asparagine). Position 307 to 309 (307 to 309 (MQY)) interacts with 3'-phosphoadenylyl sulfate. Asparagine 310 carries an N-linked (GlcNAc...) asparagine glycan. 313–314 (RA) is a 3'-phosphoadenylyl sulfate binding site. The segment at 367 to 389 (ERLLHRSKEALPREDTEEPGRVP) is disordered.

The protein belongs to the sulfotransferase 6 family. Post-translationally, N-glycosylated.

Its subcellular location is the membrane. It carries out the reaction alpha-D-glucosaminyl-[heparan sulfate](n) + 3'-phosphoadenylyl sulfate = 6-sulfo-alpha-D-glucosaminyl-[heparan sulfate](n) + adenosine 3',5'-bisphosphate + H(+). Its activity is regulated as follows. Inhibited by dithiothreitol and stimulated by protamine. Functionally, 6-O-sulfation enzyme which catalyzes the transfer of sulfate from 3'-phosphoadenosine 5'-phosphosulfate (PAPS) to position 6 of the N-sulfoglucosamine residue (GlcNS) of heparan sulfate. Also transfers sulfate to CDSNS-heparin and performs the crucial step modification in the biosynthesis of anticoagulant heparan sulfate (HSact). Critical for normal neuronal development where it may play a role in neuron branching. May also play a role in limb development. May prefer iduronic acid. This chain is Heparan-sulfate 6-O-sulfotransferase 1, found in Cricetulus griseus (Chinese hamster).